The primary structure comprises 461 residues: Dihydrofolate reductase (461 aa).

Residues 233–447 enclose the DHFR domain; the sequence is DLTMIVAVSS…VEIEFELYGK (215 aa). NADP(+)-binding positions include Ala239 and 246-252; that span reads GIGKKNS. 260–265 contacts substrate; the sequence is EMAYFA. 292–294 contributes to the NADP(+) binding site; that stretch reads RSC. Arg308 lines the substrate pocket. NADP(+) contacts are provided by residues 314–316 and 365–372; these read TRN and GGSFLYGS.

The protein belongs to the dihydrofolate reductase family.

It catalyses the reaction (6S)-5,6,7,8-tetrahydrofolate + NADP(+) = 7,8-dihydrofolate + NADPH + H(+). Its pathway is cofactor biosynthesis; tetrahydrofolate biosynthesis; 5,6,7,8-tetrahydrofolate from 7,8-dihydrofolate: step 1/1. In terms of biological role, key enzyme in folate metabolism. Catalyzes an essential reaction for de novo glycine and purine synthesis, and for DNA precursor synthesis. This Schizosaccharomyces pombe (strain 972 / ATCC 24843) (Fission yeast) protein is Dihydrofolate reductase (dfr1).